Consider the following 392-residue polypeptide: Sulfate adenylyltransferase (392 aa).

This sequence belongs to the sulfate adenylyltransferase family.

The catalysed reaction is sulfate + ATP + H(+) = adenosine 5'-phosphosulfate + diphosphate. Its pathway is sulfur metabolism; hydrogen sulfide biosynthesis; sulfite from sulfate: step 1/3. The chain is Sulfate adenylyltransferase from Trichormus variabilis (strain ATCC 29413 / PCC 7937) (Anabaena variabilis).